The sequence spans 524 residues: NAD(P)H-quinone oxidoreductase chain 4, chloroplastic (524 aa).

14 consecutive transmembrane segments (helical) span residues 4-24 (YPWLTIITLFPISAGLLIPLI), 31-51 (LIRWYALGICLIDFLLMTYVF), 87-107 (IALVLLTGFITTLATLAAWPV), 113-133 (LFYFLMLAMYSGQLGLFLAQD), 134-154 (LLLFFFMWELELIPVYLLLSM), 167-187 (FILYTAGGSIFLLAAILTISL), 211-231 (ILVYLGFLIAYAVKLPVFPFH), 242-262 (HYSTCMLLAGILLKMGGYGFI), 275-295 (IFAPWLVALGAGQIVYAALVS), 308-328 (SSVSHMGFVLIGAGSFSDLGL), 330-350 (GAILQMISHGLIGAGLFFLAG), 386-406 (LALPGMSGFVAELMIFLGIVA), 417-437 (IITCVEGIGIILTPIYLLSMV), and 465-485 (VFIILSLLVPMLGIGFYPDLT).

This sequence belongs to the complex I subunit 4 family.

The protein localises to the plastid. The protein resides in the chloroplast thylakoid membrane. It carries out the reaction a plastoquinone + NADH + (n+1) H(+)(in) = a plastoquinol + NAD(+) + n H(+)(out). The catalysed reaction is a plastoquinone + NADPH + (n+1) H(+)(in) = a plastoquinol + NADP(+) + n H(+)(out). The sequence is that of NAD(P)H-quinone oxidoreductase chain 4, chloroplastic from Staurastrum punctulatum (Green alga).